The following is a 233-amino-acid chain: MIELKHVTFGYNKKQMVLQDINITIPDGENVGILGESGCGKSTLASLVLGLFKPAKGEIYLSDNAVLPIFQHPLTSFNPDWTIETSLKEALYYYRGLTDNTAQDQLLLQHLSTFELNAQLLTKLPSEVSGGQLQRFNVMRSLLAQPRVLICDEITSNLDVIAEQNVINILKAQTITNLNHFIVISHDLSVLQRLVNRIIVLKDGMIVDDFAIEELFNVDRHPYTKELVQAFSY.

One can recognise an ABC transporter domain in the interval 2–228 (IELKHVTFGY…DRHPYTKELV (227 aa)). 35 to 42 (GESGCGKS) is a binding site for ATP.

Belongs to the ABC transporter superfamily. The complex is composed of two ATP-binding proteins (NikD and NikE), two transmembrane proteins (NikB and NikC) and a solute-binding protein (NikA).

Its subcellular location is the cell membrane. It catalyses the reaction Ni(2+)(out) + ATP + H2O = Ni(2+)(in) + ADP + phosphate + H(+). In terms of biological role, part of the ABC transporter complex NikABCDE (Opp2) involved in nickel import. Probably responsible for energy coupling to the transport system. The sequence is that of Nickel import system ATP-binding protein NikE from Staphylococcus aureus (strain MSSA476).